Consider the following 139-residue polypeptide: Mitochondrial intermembrane space import and assembly protein 40-A (139 aa).

3 disulfide bridges follow: C53–C55, C64–C97, and C74–C87. A CHCH domain is found at 61-105 (SGPCGEQFKSAFSCFHYSQEEIKGSDCLDQFRGMQECMQKYPDLY). Short sequence motifs (cx9C motif) lie at residues 64 to 74 (CGEQFKSAFSC) and 87 to 97 (CLDQFRGMQEC). The tract at residues 103–139 (DLYPQEDDEEEAEKEKQNKEAEPSVTQSSDTKEESSS) is disordered. The span at 115–124 (EKEKQNKEAE) shows a compositional bias: basic and acidic residues.

Monomer. Can form homooligomers.

Its subcellular location is the mitochondrion intermembrane space. Central component of a redox-sensitive mitochondrial intermembrane space import machinery which is required for the biogenesis of respiratory chain complexes. Functions as chaperone and catalyzes the formation of disulfide bonds in substrate proteins, such as COX17 or MICU1. Required for the import and folding of small cysteine-containing proteins (small Tim) in the mitochondrial intermembrane space (IMS). Precursor proteins to be imported into the IMS are translocated in their reduced form into the mitochondria. In Xenopus laevis (African clawed frog), this protein is Mitochondrial intermembrane space import and assembly protein 40-A (chchd4-a).